The following is a 305-amino-acid chain: Transcription factor bHLH18 (305 aa).

The interval 41-67 (LKTTHISPNLHPFSSSNPPPPKHQPSS) is disordered. Positions 44-56 (THISPNLHPFSSS) are enriched in polar residues. A bHLH domain is found at 122–171 (SNAQDHILAERKRREKLTQRFVALSALIPGLKKMDKASVLGDAIKHIKYL). The interval 201-224 (DENHQPSSSSSSDGNRNSSSSNLP) is disordered. Residues 207–222 (SSSSSSDGNRNSSSSN) are compositionally biased toward low complexity.

Homodimer. In terms of tissue distribution, expressed in roots.

The protein resides in the nucleus. The chain is Transcription factor bHLH18 (BHLH18) from Arabidopsis thaliana (Mouse-ear cress).